A 420-amino-acid chain; its full sequence is Multifunctional CCA protein (420 aa).

Residues glycine 8 and arginine 11 each contribute to the ATP site. CTP-binding residues include glycine 8 and arginine 11. 2 residues coordinate Mg(2+): aspartate 21 and aspartate 23. ATP-binding residues include arginine 91, arginine 137, and arginine 140. CTP-binding residues include arginine 91, arginine 137, and arginine 140. The HD domain occupies 228-334 (TFVHTMLVLQ…LKLFNRLDVW (107 aa)).

The protein belongs to the tRNA nucleotidyltransferase/poly(A) polymerase family. Bacterial CCA-adding enzyme type 1 subfamily. In terms of assembly, monomer. Can also form homodimers and oligomers. Mg(2+) is required as a cofactor. The cofactor is Ni(2+).

It carries out the reaction a tRNA precursor + 2 CTP + ATP = a tRNA with a 3' CCA end + 3 diphosphate. The enzyme catalyses a tRNA with a 3' CCA end + 2 CTP + ATP = a tRNA with a 3' CCACCA end + 3 diphosphate. Catalyzes the addition and repair of the essential 3'-terminal CCA sequence in tRNAs without using a nucleic acid template. Adds these three nucleotides in the order of C, C, and A to the tRNA nucleotide-73, using CTP and ATP as substrates and producing inorganic pyrophosphate. tRNA 3'-terminal CCA addition is required both for tRNA processing and repair. Also involved in tRNA surveillance by mediating tandem CCA addition to generate a CCACCA at the 3' terminus of unstable tRNAs. While stable tRNAs receive only 3'-terminal CCA, unstable tRNAs are marked with CCACCA and rapidly degraded. The polypeptide is Multifunctional CCA protein (Pasteurella multocida (strain Pm70)).